The sequence spans 279 residues: Aspartate/glutamate leucyltransferase (279 aa).

Residues 245–279 are disordered; it reads ARERGARPPRGPGALKDACDLPLSDAQPADIEDLD.

The protein belongs to the R-transferase family. Bpt subfamily.

It localises to the cytoplasm. The enzyme catalyses N-terminal L-glutamyl-[protein] + L-leucyl-tRNA(Leu) = N-terminal L-leucyl-L-glutamyl-[protein] + tRNA(Leu) + H(+). The catalysed reaction is N-terminal L-aspartyl-[protein] + L-leucyl-tRNA(Leu) = N-terminal L-leucyl-L-aspartyl-[protein] + tRNA(Leu) + H(+). In terms of biological role, functions in the N-end rule pathway of protein degradation where it conjugates Leu from its aminoacyl-tRNA to the N-termini of proteins containing an N-terminal aspartate or glutamate. This Caulobacter vibrioides (strain ATCC 19089 / CIP 103742 / CB 15) (Caulobacter crescentus) protein is Aspartate/glutamate leucyltransferase.